A 96-amino-acid chain; its full sequence is Co-chaperonin GroES (96 aa).

It belongs to the GroES chaperonin family. In terms of assembly, heptamer of 7 subunits arranged in a ring. Interacts with the chaperonin GroEL.

It localises to the cytoplasm. Its function is as follows. Together with the chaperonin GroEL, plays an essential role in assisting protein folding. The GroEL-GroES system forms a nano-cage that allows encapsulation of the non-native substrate proteins and provides a physical environment optimized to promote and accelerate protein folding. GroES binds to the apical surface of the GroEL ring, thereby capping the opening of the GroEL channel. This is Co-chaperonin GroES from Streptococcus pyogenes serotype M18 (strain MGAS8232).